We begin with the raw amino-acid sequence, 357 residues long: Phosphoribosylformylglycinamidine cyclo-ligase (357 aa).

It belongs to the AIR synthase family.

Its subcellular location is the cytoplasm. It catalyses the reaction 2-formamido-N(1)-(5-O-phospho-beta-D-ribosyl)acetamidine + ATP = 5-amino-1-(5-phospho-beta-D-ribosyl)imidazole + ADP + phosphate + H(+). Its pathway is purine metabolism; IMP biosynthesis via de novo pathway; 5-amino-1-(5-phospho-D-ribosyl)imidazole from N(2)-formyl-N(1)-(5-phospho-D-ribosyl)glycinamide: step 2/2. The polypeptide is Phosphoribosylformylglycinamidine cyclo-ligase (Rhizobium leguminosarum).